Consider the following 506-residue polypeptide: Arabinose import ATP-binding protein AraG (506 aa).

ABC transporter domains are found at residues 10-245 (LEFC…MVGR) and 253-501 (YRSR…MLGN). ATP is bound at residue 42 to 49 (GENGAGKS).

This sequence belongs to the ABC transporter superfamily. Arabinose importer (TC 3.A.1.2.2) family. The complex is composed of two ATP-binding proteins (AraG), two transmembrane proteins (AraH) and a solute-binding protein (AraF).

It localises to the cell inner membrane. The enzyme catalyses L-arabinose(out) + ATP + H2O = L-arabinose(in) + ADP + phosphate + H(+). In terms of biological role, part of the ABC transporter complex AraFGH involved in arabinose import. Responsible for energy coupling to the transport system. The protein is Arabinose import ATP-binding protein AraG of Vibrio parahaemolyticus serotype O3:K6 (strain RIMD 2210633).